We begin with the raw amino-acid sequence, 458 residues long: Zinc finger protein 239 (458 aa).

Lys-108 is covalently cross-linked (Glycyl lysine isopeptide (Lys-Gly) (interchain with G-Cter in SUMO2)). The residue at position 191 (Ser-191) is a Phosphoserine. 9 consecutive C2H2-type zinc fingers follow at residues 207–229 (YECSQCGKNFSQSSELLLHQRDH), 235–257 (YKCEQCGKGFTRSSSLLIHQAVH), 263–285 (YKCDKCGKGFTRSSSLLIHHAVH), 291–313 (YKCDKCGKGFSQSSKLHIHQRVH), 319–341 (YECEECGMSFSQRSNLHIHQRVH), 347–369 (YKCGECGKGFSQSSNLHIHRCIH), 375–397 (YQCYECGKGFSQSSDLRIHLRVH), 403–425 (YHCGKCGKGFSQSSKLLIHQRVH), and 431–453 (YECSKCGKGFSQSSNLHIHQRVH).

This sequence belongs to the krueppel C2H2-type zinc-finger protein family.

The protein resides in the nucleus. Its function is as follows. May be involved in transcriptional regulation. This chain is Zinc finger protein 239 (ZNF239), found in Homo sapiens (Human).